The chain runs to 431 residues: uncharacterized protein (431 aa).

2 disordered regions span residues 17-66 (VDPE…GQQA) and 81-415 (GSVT…ALPR). The span at 91–106 (DKADREPAARPRDPRS) shows a compositional bias: basic and acidic residues. Residues 173-195 (TYRRRRPTAATPSRKKKARRGPK) show a composition bias toward basic residues. Low complexity predominate over residues 235-244 (RTPGPVHSAA). Over residues 299-312 (RMGGSSGGRGGTPG) the composition is skewed to gly residues. Positions 317-342 (RAAPGARPTAPDGAPGRWDGPADGPA) are enriched in low complexity. The segment covering 343 to 360 (PGLGRGGWGVGREAGGSG) has biased composition (gly residues).

This is an uncharacterized protein from Homo sapiens (Human).